Reading from the N-terminus, the 351-residue chain is Probable RNA methyltransferase BAV1540 (351 aa).

Glu90 functions as the Proton acceptor in the catalytic mechanism. The Radical SAM core domain maps to 93–319; sequence LLPRDGLCVS…VKVRNSAGQD (227 aa). A disulfide bond links Cys100 and Cys324. Residues Cys107, Cys111, and Cys114 each contribute to the [4Fe-4S] cluster site. Residues 152 to 153, Ser182, 205 to 207, and Asn281 each bind S-adenosyl-L-methionine; these read GE and SLH. Catalysis depends on Cys324, which acts as the S-methylcysteine intermediate.

It belongs to the radical SAM superfamily. RlmN family. Requires [4Fe-4S] cluster as cofactor.

Its subcellular location is the cytoplasm. This chain is Probable RNA methyltransferase BAV1540, found in Bordetella avium (strain 197N).